A 196-amino-acid chain; its full sequence is Imidazole glycerol phosphate synthase subunit HisH (196 aa).

The 195-residue stretch at Lys-2–Leu-196 folds into the Glutamine amidotransferase type-1 domain. The Nucleophile role is filled by Cys-77. Active-site residues include His-178 and Glu-180.

Heterodimer of HisH and HisF.

The protein localises to the cytoplasm. It carries out the reaction 5-[(5-phospho-1-deoxy-D-ribulos-1-ylimino)methylamino]-1-(5-phospho-beta-D-ribosyl)imidazole-4-carboxamide + L-glutamine = D-erythro-1-(imidazol-4-yl)glycerol 3-phosphate + 5-amino-1-(5-phospho-beta-D-ribosyl)imidazole-4-carboxamide + L-glutamate + H(+). It catalyses the reaction L-glutamine + H2O = L-glutamate + NH4(+). Its pathway is amino-acid biosynthesis; L-histidine biosynthesis; L-histidine from 5-phospho-alpha-D-ribose 1-diphosphate: step 5/9. IGPS catalyzes the conversion of PRFAR and glutamine to IGP, AICAR and glutamate. The HisH subunit catalyzes the hydrolysis of glutamine to glutamate and ammonia as part of the synthesis of IGP and AICAR. The resulting ammonia molecule is channeled to the active site of HisF. The sequence is that of Imidazole glycerol phosphate synthase subunit HisH from Bacteroides fragilis (strain ATCC 25285 / DSM 2151 / CCUG 4856 / JCM 11019 / LMG 10263 / NCTC 9343 / Onslow / VPI 2553 / EN-2).